Consider the following 76-residue polypeptide: Mating-type pheromone BBP1(1) (76 aa).

Cys-73 bears the Cysteine methyl ester mark. Cys-73 carries the S-farnesyl cysteine lipid modification. A propeptide spans 74 to 76 (removed in mature form); sequence VVA.

It is found in the cell membrane. Its function is as follows. Activates B-regulated development. This is Mating-type pheromone BBP1(1) (BBP1(1)) from Schizophyllum commune (Split gill fungus).